A 66-amino-acid polypeptide reads, in one-letter code: Small vasohibin-binding protein (66 aa).

Residues 1 to 23 (MDPPARKEKSKVKEPAFRVEKAK) are compositionally biased toward basic and acidic residues. A disordered region spans residues 1–30 (MDPPARKEKSKVKEPAFRVEKAKQKSAQQE). A coiled-coil region spans residues 5–52 (ARKEKSKVKEPAFRVEKAKQKSAQQELKQRQRAEIYALNRVMTELEQQ).

The protein belongs to the SVBP family. In terms of assembly, interacts with VASH1 and VASH2. As to expression, highly expressed in bone marrow, spleen and testis.

It localises to the cytoplasm. It is found in the secreted. Its subcellular location is the cytoskeleton. Enhances the tyrosine carboxypeptidase activity of VASH1 and VASH2, thereby promoting the removal of the C-terminal tyrosine residue of alpha-tubulin. Also required to enhance the solubility and secretion of VASH1 and VASH2. Plays a role in axon and excitatory synapse formation. This Mus musculus (Mouse) protein is Small vasohibin-binding protein.